A 466-amino-acid chain; its full sequence is Ribulose bisphosphate carboxylase large chain (466 aa).

Lysine 4 carries the post-translational modification N6,N6,N6-trimethyllysine. Substrate-binding residues include asparagine 113 and threonine 163. Residue lysine 165 is the Proton acceptor of the active site. Lysine 167 is a binding site for substrate. Mg(2+)-binding residues include lysine 191, aspartate 193, and glutamate 194. Lysine 191 is subject to N6-carboxylysine. Catalysis depends on histidine 284, which acts as the Proton acceptor. Substrate-binding residues include arginine 285, histidine 317, and serine 369.

It belongs to the RuBisCO large chain family. Type I subfamily. In terms of assembly, heterohexadecamer of 8 large chains and 8 small chains; disulfide-linked. The disulfide link is formed within the large subunit homodimers. Mg(2+) serves as cofactor. In terms of processing, the disulfide bond which can form in the large chain dimeric partners within the hexadecamer appears to be associated with oxidative stress and protein turnover.

The protein resides in the plastid. Its subcellular location is the chloroplast. It catalyses the reaction 2 (2R)-3-phosphoglycerate + 2 H(+) = D-ribulose 1,5-bisphosphate + CO2 + H2O. The enzyme catalyses D-ribulose 1,5-bisphosphate + O2 = 2-phosphoglycolate + (2R)-3-phosphoglycerate + 2 H(+). RuBisCO catalyzes two reactions: the carboxylation of D-ribulose 1,5-bisphosphate, the primary event in carbon dioxide fixation, as well as the oxidative fragmentation of the pentose substrate in the photorespiration process. Both reactions occur simultaneously and in competition at the same active site. The sequence is that of Ribulose bisphosphate carboxylase large chain from Barleria prionitis (Porcupine flower).